The following is a 142-amino-acid chain: Small ribosomal subunit protein uS12 (142 aa).

The disordered stretch occupies residues 1–43; sequence MPTFNQLVRKGRKVIEKKSNSPALQKGFNSKKKKPTDVNSPQK. The residue at position 102 (Asp-102) is a 3-methylthioaspartic acid.

It belongs to the universal ribosomal protein uS12 family. In terms of assembly, part of the 30S ribosomal subunit. Contacts proteins S8 and S17. May interact with IF1 in the 30S initiation complex.

Functionally, with S4 and S5 plays an important role in translational accuracy. Interacts with and stabilizes bases of the 16S rRNA that are involved in tRNA selection in the A site and with the mRNA backbone. Located at the interface of the 30S and 50S subunits, it traverses the body of the 30S subunit contacting proteins on the other side and probably holding the rRNA structure together. The combined cluster of proteins S8, S12 and S17 appears to hold together the shoulder and platform of the 30S subunit. The protein is Small ribosomal subunit protein uS12 of Ruminiclostridium cellulolyticum (strain ATCC 35319 / DSM 5812 / JCM 6584 / H10) (Clostridium cellulolyticum).